We begin with the raw amino-acid sequence, 360 residues long: Peptide chain release factor 1 (360 aa).

Gln237 is subject to N5-methylglutamine.

The protein belongs to the prokaryotic/mitochondrial release factor family. Methylated by PrmC. Methylation increases the termination efficiency of RF1.

The protein resides in the cytoplasm. Peptide chain release factor 1 directs the termination of translation in response to the peptide chain termination codons UAG and UAA. This is Peptide chain release factor 1 from Ectopseudomonas mendocina (strain ymp) (Pseudomonas mendocina).